Reading from the N-terminus, the 702-residue chain is Elongation factor G (702 aa).

In terms of domain architecture, tr-type G spans 8-290 (SRYRNIGISA…AVIEYLPSPT (283 aa)). Residues 17–24 (AHIDAGKT), 88–92 (DTPGH), and 142–145 (NKMD) contribute to the GTP site.

Belongs to the TRAFAC class translation factor GTPase superfamily. Classic translation factor GTPase family. EF-G/EF-2 subfamily.

The protein resides in the cytoplasm. Functionally, catalyzes the GTP-dependent ribosomal translocation step during translation elongation. During this step, the ribosome changes from the pre-translocational (PRE) to the post-translocational (POST) state as the newly formed A-site-bound peptidyl-tRNA and P-site-bound deacylated tRNA move to the P and E sites, respectively. Catalyzes the coordinated movement of the two tRNA molecules, the mRNA and conformational changes in the ribosome. This is Elongation factor G from Edwardsiella ictaluri (strain 93-146).